The following is a 207-amino-acid chain: MALGWLHTAKFLTTAPQLHFLPALDVPEIAFVGRSNAGKSTCINTLTQQKQLAFASKKPGRTQHINLFSLGKQGVTDAVFADLPGYGYAAVPKQDKIRWQQVMANYLVTRENLKAIVLMCDPRHGLTELDEILLDIVRPRVEEGLKFLVVLTKADKLTRTEQTKALSIMKLQAGGGEVRLFSATKRQGIDDVATLLWQWAHPADGAA.

One can recognise an EngB-type G domain in the interval 25 to 202 (DVPEIAFVGR…ATLLWQWAHP (178 aa)). Residues 33–40 (GRSNAGKS), 60–64 (GRTQH), 82–85 (DLPG), 152–155 (TKAD), and 181–183 (FSA) contribute to the GTP site. Ser40 and Thr62 together coordinate Mg(2+).

This sequence belongs to the TRAFAC class TrmE-Era-EngA-EngB-Septin-like GTPase superfamily. EngB GTPase family. Mg(2+) serves as cofactor.

Functionally, necessary for normal cell division and for the maintenance of normal septation. The polypeptide is Probable GTP-binding protein EngB (Albidiferax ferrireducens (strain ATCC BAA-621 / DSM 15236 / T118) (Rhodoferax ferrireducens)).